We begin with the raw amino-acid sequence, 4235 residues long: Tenellin synthetase (4235 aa).

Positions 15-455 (SEPIAIVGSA…GTNAHAIIER (441 aa)) constitute a Ketosynthase family 3 (KS3) domain. Catalysis depends on for beta-ketoacyl synthase activity residues Cys-189, His-326, and His-375. The tract at residues 590–924 (IFTGQGAQWP…ANDAVAFSTA (335 aa)) is malonyl-CoA:ACP transacylase (MAT) domain. Residues 993 to 1135 (HELLGRRMPD…GRIAVHLGAK (143 aa)) are N-terminal hotdog fold. A dehydratase (DH) domain region spans residues 993–1310 (HELLGRRMPD…GFEVRAVGEP (318 aa)). A PKS/mFAS DH domain is found at 993-1313 (HELLGRRMPD…VRAVGEPDAS (321 aa)). His-1025 serves as the catalytic Proton acceptor; for dehydratase activity. The tract at residues 1158 to 1313 (LQQLDCEKLY…VRAVGEPDAS (156 aa)) is C-terminal hotdog fold. Residue Asp-1217 is the Proton donor; for dehydratase activity of the active site. The interval 1459–1652 (RLYTEDKGMH…FSGVDHIVHD (194 aa)) is methyltransferase (MT) domain. The interval 2208–2381 (TYLMVGAAGG…AASIIHVGHV (174 aa)) is ketoreductase (KR) domain. The Carrier 1 domain occupies 2500–2580 (EAAAAALKGF…QLSALAAKLA (81 aa)). Ser-2540 carries the O-(pantetheine 4'-phosphoryl)serine modification. The disordered stretch occupies residues 2587-2709 (RAQLEEASGN…EISSNGFFTQ (123 aa)). The span at 2605–2619 (NDKETGPSKKGKAQE) shows a compositional bias: basic and acidic residues. Composition is skewed to polar residues over residues 2645–2659 (GGSS…SSVS) and 2666–2678 (QEST…NNGE). Residues 2679–2695 (STPSKSSNCNSDSGSDN) show a composition bias toward low complexity. Positions 2720-3163 (REAPMSPAQS…TAQSVGDCVV (444 aa)) are condensation (C) domain. The interval 3197–3609 (CQQHSTKSAI…DGTLLCFGRI (413 aa)) is adenylation (A) (KR) domain. The tract at residues 3724–3750 (DEAAAATSPSNDNNNNNTPSGGGGEKM) is disordered. Low complexity predominate over residues 3726–3742 (AAAATSPSNDNNNNNTP). The region spanning 3748-3833 (EKMTVRQGEL…GMARCVAEQR (86 aa)) is the Carrier 2 domain. Ser-3793 carries the post-translational modification O-(pantetheine 4'-phosphoryl)serine. Residues 3860–3889 (EKLQHSSASSSSSSSSSSAGSSSTQRPRKT) form a disordered region. The span at 3865–3882 (SSASSSSSSSSSSAGSSS) shows a compositional bias: low complexity. The tract at residues 3896–4141 (LTGATGFLGG…LDFGQVDKVV (246 aa)) is reductase (RED) domain.

It in the C-terminal section; belongs to the NRP synthetase family.

The protein operates within secondary metabolite biosynthesis. In terms of biological role, hybrid PKS-NRPS synthetase; part of the gene cluster that mediates the biosynthesis of tenellin-type 2-pyridones, iron-chelating compounds involved in iron stress tolerance, competition with the natural competitor fungus Metarhizium robertsii and insect hosts infection. TenS catalyzes the assembly of the polyketide-amino acid backbone. Because tenS lacks a designated enoylreductase (ER) domain, the required activity is provided the enoyl reductase tenC. Upon formation of the polyketide backbone on the thiotemplate, the triketide is transferred to the NRPS module and linked to tyrosine to produce the pyrrolidine-2-dione intermediates, including pretellinin A, 11-hydropretellenin A, 12-hydropretellenin A, 13-hydropretellenin A, 14-hydropretellenin A, 12-oxopretellenin A and prototellinin D. The pathway begins with the assembly of the polyketide-amino acid backbone by the hybrid PKS-NRPS tenS with the help of the enoyl reductase tenC. These enzymes catalyze the synthesis of the pyrrolidine-2-dione intermediates pretellinin A, 11-hydropretellenin A, 12-hydropretellenin A, 13-hydropretellenin A, 14-hydropretellenin A, 12-oxopretellenin A and prototellinin D. The cytochrome P450 monooxygenase tenA then catalyzes an oxidative ring expansion of pretenellin A and 14-hydropretellenin A to form the 2-pyridone core, leading to pretenellin B and pyridovericin, respectively. The cytochrome P450 monooxygenase tenB is then required for the selective N-hydroxylation of the 2-pyridone nitrogen of yield tellinin and 15-hydroxytellenin (15-HT), respectively. The UDP-glucosyltransferase GT1 and the methyltransferase MT1, located outside the tenS gene cluster, contribute to the stepwise glycosylation and methylation of 15-HT to obtain the glycoside pyridovericin-N-O-(4-O-methyl-beta-D-glucopyranoside) (PMGP). Additional related compounds such as 1-O-methyl-15-HT, (8Z)-1-O-methyl-15-HT, and O-methyltenellin A are also produced but the enzymes involved in their biosynthesis have still to be determined. This is Tenellin synthetase from Beauveria bassiana (strain ARSEF 2860) (White muscardine disease fungus).